The sequence spans 72 residues: MKAWVIGLLVICAVVIAEPVESRNYIEYGAINKCAGPNPPPGCNPPGTEQKNPTPVNEYSRGCSKIHRCRRD.

An N-terminal signal peptide occupies residues 1-17; sequence MKAWVIGLLVICAVVIA. 2 disulfide bridges follow: Cys-34/Cys-43 and Cys-63/Cys-69. Positions 37 to 60 are disordered; it reads PNPPPGCNPPGTEQKNPTPVNEYS.

The protein belongs to the plant rapid alkalinization factor (RALF) family.

The protein resides in the secreted. Cell signaling peptide that may regulate plant stress, growth, and development. Mediates a rapid alkalinization of extracellular space by mediating a transient increase in the cytoplasmic Ca(2+) concentration leading to a calcium-dependent signaling events through a cell surface receptor and a concomitant activation of some intracellular mitogen-activated protein kinases. The sequence is that of Protein RALF-like 12 (RALFL12) from Arabidopsis thaliana (Mouse-ear cress).